A 442-amino-acid chain; its full sequence is Plasmalemma vesicle-associated protein (442 aa).

At 1 to 27 (MGLAMEHGGSYARAGGSSRGCWYYLRY) the chain is on the cytoplasmic side. Residues 28-48 (FFLFVSLIQFLIILGLVLFMV) form a helical; Signal-anchor for type II membrane protein membrane-spanning segment. Over 49–442 (YGNVHVSTES…AGIPVAPSSG (394 aa)) the chain is Extracellular. The stretch at 57-77 (ESNLQATERRAEGLYSQLLGL) forms a coiled coil. N-linked (GlcNAc...) asparagine glycosylation is found at Asn83, Asn89, Asn113, and Asn151. 2 coiled-coil regions span residues 202–225 (KTRE…QALC) and 280–387 (SSKV…SALD). Disordered regions lie at residues 301–328 (NSDL…VEKE) and 394–418 (SQPM…PASL). The span at 319 to 328 (QEAKQKVEKE) shows a compositional bias: basic and acidic residues.

Homodimer. As to expression, expressed in lung, kidney, heart, aorta, placenta, muscle, pituitary gland, adrenals, mammary gland, bladder, lymph node, bone marrow, trachea, digestive tract, liver and tumor-associated endothelium.

The protein resides in the cell membrane. Its subcellular location is the membrane. The protein localises to the caveola. It is found in the cytoplasm. It localises to the perinuclear region. Its function is as follows. Endothelial cell-specific membrane protein involved in the formation of the diaphragms that bridge endothelial fenestrae. It is also required for the formation of stomata of caveolae and transendothelial channels. Functions in microvascular permeability, endothelial fenestrae contributing to the passage of water and solutes and regulating transcellular versus paracellular flow in different organs. Plays a specific role in embryonic development. The chain is Plasmalemma vesicle-associated protein (PLVAP) from Homo sapiens (Human).